The sequence spans 206 residues: Ribosomal RNA small subunit methyltransferase G (206 aa).

Residues G74, L79, 125 to 126 (VE), and R140 each bind S-adenosyl-L-methionine.

This sequence belongs to the methyltransferase superfamily. RNA methyltransferase RsmG family.

The protein localises to the cytoplasm. It carries out the reaction guanosine(527) in 16S rRNA + S-adenosyl-L-methionine = N(7)-methylguanosine(527) in 16S rRNA + S-adenosyl-L-homocysteine. Its function is as follows. Specifically methylates the N7 position of guanine in position 527 of 16S rRNA. This Shewanella oneidensis (strain ATCC 700550 / JCM 31522 / CIP 106686 / LMG 19005 / NCIMB 14063 / MR-1) protein is Ribosomal RNA small subunit methyltransferase G.